The chain runs to 252 residues: Pantothenate synthetase (252 aa).

29–36 provides a ligand contact to ATP; that stretch reads MGNLHAGH. Catalysis depends on H36, which acts as the Proton donor. Q60 lines the (R)-pantoate pocket. Q60 is a binding site for beta-alanine. Residue 146–149 participates in ATP binding; sequence GEKD. Q152 provides a ligand contact to (R)-pantoate. ATP is bound by residues V175 and 183 to 186; that span reads CSSR.

The protein belongs to the pantothenate synthetase family. Homodimer.

It localises to the cytoplasm. The enzyme catalyses (R)-pantoate + beta-alanine + ATP = (R)-pantothenate + AMP + diphosphate + H(+). The protein operates within cofactor biosynthesis; (R)-pantothenate biosynthesis; (R)-pantothenate from (R)-pantoate and beta-alanine: step 1/1. Functionally, catalyzes the condensation of pantoate with beta-alanine in an ATP-dependent reaction via a pantoyl-adenylate intermediate. This is Pantothenate synthetase from Legionella pneumophila (strain Corby).